Consider the following 343-residue polypeptide: N-acetyl-gamma-glutamyl-phosphate reductase (343 aa).

The active site involves C147.

Belongs to the NAGSA dehydrogenase family. Type 1 subfamily.

The protein localises to the cytoplasm. The enzyme catalyses N-acetyl-L-glutamate 5-semialdehyde + phosphate + NADP(+) = N-acetyl-L-glutamyl 5-phosphate + NADPH + H(+). It participates in amino-acid biosynthesis; L-arginine biosynthesis; N(2)-acetyl-L-ornithine from L-glutamate: step 3/4. Catalyzes the NADPH-dependent reduction of N-acetyl-5-glutamyl phosphate to yield N-acetyl-L-glutamate 5-semialdehyde. The protein is N-acetyl-gamma-glutamyl-phosphate reductase of Listeria monocytogenes serotype 4b (strain F2365).